Here is a 545-residue protein sequence, read N- to C-terminus: Probable quinate permease (545 aa).

Residues 1-22 are Cytoplasmic-facing; sequence MSILSLVEDRPTPKEVYNWRIY. A helical membrane pass occupies residues 23-43; the sequence is LLAAVASFTSCMIGYDSAFIG. At 44–66 the chain is on the extracellular side; that stretch reads TTISLQSFKDEFNWDAMSTDKQN. Residues 67–87 form a helical membrane-spanning segment; the sequence is LISANIVSLYQAGAFFGAFFA. Residues 88–97 lie on the Cytoplasmic side of the membrane; it reads YPMGHFWGRR. A helical transmembrane segment spans residues 98-118; sequence WGLFVAALVFTLGAGLMLGAN. Residues 119 to 130 are Extracellular-facing; it reads GDRGLGLIYGGR. Residues 131–151 form a helical membrane-spanning segment; the sequence is VLAGLGVGAGSNITPIYISEL. Over 152 to 159 the chain is Cytoplasmic; that stretch reads APPAIRGR. Residues 160-180 traverse the membrane as a helical segment; that stretch reads LVGVYELGWQIGGLVGFWICF. Over 181–193 the chain is Extracellular; that stretch reads GVDDTLAPSHKQW. A helical membrane pass occupies residues 194–214; sequence IIPFAVQLIPSGLLLLGILFV. At 215–285 the chain is on the cytoplasmic side; sequence RESPRWLFLR…VWSNKRIMYR (71 aa). The helical transmembrane segment at 286 to 306 threads the bilayer; it reads LFLGSMLFLWQNGSGINAINY. Residues 307–325 lie on the Extracellular side of the membrane; it reads YSPTVFKSIGLRGANTSLL. A helical membrane pass occupies residues 326 to 346; sequence TTGIFGVVKTVVTFVWLLWLI. Over 347 to 352 the chain is Cytoplasmic; that stretch reads DRLGRR. The helical transmembrane segment at 353–373 threads the bilayer; that stretch reads LLLMIGAAGGSVCLWIVGAYI. Residues 374-384 lie on the Extracellular side of the membrane; that stretch reads KVAKPTERDPD. Residues 385 to 405 traverse the membrane as a helical segment; it reads APLDGGGIAAMFFFYLWTVFY. The Cytoplasmic segment spans residues 406–457; it reads TPSWNGTPWVMNSEMFDPNVRSLAQACAAGSNWLWNFLISRFTPQMFAKMEY. Residues 458–478 form a helical membrane-spanning segment; the sequence is GVYFFFASLMILSIVFVFFLI. Topologically, residues 479-545 are extracellular; the sequence is PETKGIPLES…VEQAESVPKA (67 aa). The tract at residues 520–545 is disordered; that stretch reads IEESGYTKSDAQQVERVEQAESVPKA.

This sequence belongs to the major facilitator superfamily. Sugar transporter (TC 2.A.1.1) family. Interacts with creB. Post-translationally, ubiquitinated. Deubiquitinated by creB, probably to control its activity or amount.

It is found in the cell membrane. Functionally, integral membrane transporter that imports quinic acid to be catabolized as a carbon source. The polypeptide is Probable quinate permease (qutD) (Aspergillus terreus (strain NIH 2624 / FGSC A1156)).